Consider the following 211-residue polypeptide: MAIQEIRHPLIRHKLGLLRRADISTKNFRELAQEVTMLLTYEATKDLPVVDCEIEGWAGNVTTQRIAGKKITIVPILRAGIGMLDGVLNLIPSAKVSVLGLERDEATLEVRTYYKKLVPDVANRIAMIIDPMLATGNSLVAAIDVLKASGCKDIRVMVLVAAPEGIAKVETAHPDIQLYTASIDNGLNEHGYIVPGLGDAGDKIFGSVQKD.

5-phospho-alpha-D-ribose 1-diphosphate contacts are provided by residues Arg78, Arg103, and 130–138 (DPMLATGNS). Uracil is bound by residues Ile193 and 198-200 (GDA). Position 199 (Asp199) interacts with 5-phospho-alpha-D-ribose 1-diphosphate.

Belongs to the UPRTase family. It depends on Mg(2+) as a cofactor.

It carries out the reaction UMP + diphosphate = 5-phospho-alpha-D-ribose 1-diphosphate + uracil. It functions in the pathway pyrimidine metabolism; UMP biosynthesis via salvage pathway; UMP from uracil: step 1/1. Its activity is regulated as follows. Allosterically activated by GTP. Its function is as follows. Catalyzes the conversion of uracil and 5-phospho-alpha-D-ribose 1-diphosphate (PRPP) to UMP and diphosphate. The polypeptide is Uracil phosphoribosyltransferase (Acinetobacter baumannii (strain ATCC 17978 / DSM 105126 / CIP 53.77 / LMG 1025 / NCDC KC755 / 5377)).